The primary structure comprises 289 residues: MITGKTKLLGVIGHPVEHSLSPVMHNAAIAQLGLDYVYLPFPIAPDNLEAAIALLATIGVVGFSVTIPHKQAIIPLLSEISPVAQAIGAVNTVTRQNNQWVGTNTDIEGFIAPLQTTYKRDWSQQIAVILGNGGAARAVVAGCYQLGFAEIHVVGRNVQRLEEFRHSWENSPIAENLQVHTWDYLAKLIPQANLLVNTTPIGMYPQVDESPLSAEELVNLQTGTIAYDLIYIPKPTQFLQKAQQQGAIIIDGLEMLVQQGVAALKIWLQQDDIPVDVMRQALIKHLGLK.

Residues 19 to 21 and Thr66 each bind shikimate; that span reads SLS. Lys70 acts as the Proton acceptor in catalysis. Residues Asn91 and Asp106 each coordinate shikimate. NADP(+) contacts are provided by residues 131-135 and Leu229; that span reads GNGGA. Tyr231 contacts shikimate. Gly252 contributes to the NADP(+) binding site.

This sequence belongs to the shikimate dehydrogenase family. In terms of assembly, homodimer.

The catalysed reaction is shikimate + NADP(+) = 3-dehydroshikimate + NADPH + H(+). It functions in the pathway metabolic intermediate biosynthesis; chorismate biosynthesis; chorismate from D-erythrose 4-phosphate and phosphoenolpyruvate: step 4/7. Its function is as follows. Involved in the biosynthesis of the chorismate, which leads to the biosynthesis of aromatic amino acids. Catalyzes the reversible NADPH linked reduction of 3-dehydroshikimate (DHSA) to yield shikimate (SA). In Nostoc sp. (strain PCC 7120 / SAG 25.82 / UTEX 2576), this protein is Shikimate dehydrogenase (NADP(+)).